A 453-amino-acid chain; its full sequence is MAKKKATFICQECGYQSPKYLGRCPNCSAWSSFVEEVEVKEVKNARVSLAGEKSRPVKLKDVDNISYHRTQTDMSEFNRVLGGGVVPGSLILIGGDPGIGKSTLLLQVSTQLANKGTVLYASGEESAEQIKLRSERLGDIDNEFYLYAETNMQAIRTEIENIKPDFLIIDSIQTIMSPDITGVQGSVSQVREVTAELMQLAKTNNIATFIVGHVTKEGTLAGPRMLEHMVDTVLYFEGERHHTFRILRAVKNRFGSTNEIGIFEMQSGGLVEVLNPSQVFLEERLDGATGSAVVVTMEGSRPILAEVQSLVTPTVFGNARRTTTGLDFNRVSLIMAVLEKRCGLLLQNQDAYLKSAGGVKLDEPAIDLAVAVAIASSYKEKPTSPQEAFLGEIGLTGEIRRVTRIEQRINEAAKLGFTKVYAPKNALQGIDISQGIEVVGVTTVGQVLKAVFS.

A C4-type zinc finger spans residues 10 to 27; sequence CQECGYQSPKYLGRCPNC. 95–102 is an ATP binding site; sequence GDPGIGKS. Positions 251–255 match the RadA KNRFG motif motif; it reads KNRFG. Positions 350-453 are lon-protease-like; it reads DAYLKSAGGV…VGQVLKAVFS (104 aa).

It belongs to the RecA family. RadA subfamily.

In terms of biological role, DNA-dependent ATPase involved in processing of recombination intermediates, plays a role in repairing DNA breaks. Stimulates the branch migration of RecA-mediated strand transfer reactions, allowing the 3' invading strand to extend heteroduplex DNA faster. Binds ssDNA in the presence of ADP but not other nucleotides, has ATPase activity that is stimulated by ssDNA and various branched DNA structures, but inhibited by SSB. Does not have RecA's homology-searching function. This is DNA repair protein RadA from Streptococcus pyogenes serotype M3 (strain ATCC BAA-595 / MGAS315).